The sequence spans 580 residues: Glutamine--tRNA ligase (580 aa).

Positions 51-61 (PEPNGYLHIGH) match the 'HIGH' region motif. ATP is bound by residues 52–54 (EPN) and 58–64 (HIGHAKS). The L-glutamine site is built by D84 and Y233. Residues T252 and 287 to 288 (RL) contribute to the ATP site. The short motif at 294–298 (ITSKR) is the 'KMSKS' region element.

This sequence belongs to the class-I aminoacyl-tRNA synthetase family. As to quaternary structure, monomer.

The protein localises to the cytoplasm. The enzyme catalyses tRNA(Gln) + L-glutamine + ATP = L-glutaminyl-tRNA(Gln) + AMP + diphosphate. This Ralstonia nicotianae (strain ATCC BAA-1114 / GMI1000) (Ralstonia solanacearum) protein is Glutamine--tRNA ligase.